A 192-amino-acid chain; its full sequence is Probable nicotinate-nucleotide adenylyltransferase (192 aa).

The protein belongs to the NadD family.

It catalyses the reaction nicotinate beta-D-ribonucleotide + ATP + H(+) = deamido-NAD(+) + diphosphate. The protein operates within cofactor biosynthesis; NAD(+) biosynthesis; deamido-NAD(+) from nicotinate D-ribonucleotide: step 1/1. In terms of biological role, catalyzes the reversible adenylation of nicotinate mononucleotide (NaMN) to nicotinic acid adenine dinucleotide (NaAD). The sequence is that of Probable nicotinate-nucleotide adenylyltransferase from Rhizobium leguminosarum bv. trifolii (strain WSM2304).